A 25-amino-acid polypeptide reads, in one-letter code: FQPSLVLDTAKILLDNYTFPESLMG.

The protein resides in the secreted. It is found in the extracellular space. The protein localises to the extracellular matrix. It localises to the interphotoreceptor matrix. Functionally, IRBP shuttles 11-cis and all trans retinoids between the retinol isomerase in the pigment epithelium and the visual pigments in the photoreceptor cells of the retina. This is Retinol-binding protein 3 (RBP3) from Sus scrofa (Pig).